The sequence spans 124 residues: MPTIQQLIRSERSKAKKKTKSPALKQCPQRRGVCTRVYTTTPKKPNSALRKVARVRLTSGFEVTAYIPGIGHNLQEHSVVLIRGGRVKDLPGVRYHIIRGTLDAQGVKDRKQGRSKYGTKKPKE.

A disordered region spans residues 1-28; sequence MPTIQQLIRSERSKAKKKTKSPALKQCP. Residue Asp-89 is modified to 3-methylthioaspartic acid. Positions 101–124 are disordered; the sequence is TLDAQGVKDRKQGRSKYGTKKPKE. A compositionally biased stretch (basic residues) spans 113-124; sequence GRSKYGTKKPKE.

This sequence belongs to the universal ribosomal protein uS12 family. In terms of assembly, part of the 30S ribosomal subunit. Contacts proteins S8 and S17. May interact with IF1 in the 30S initiation complex.

With S4 and S5 plays an important role in translational accuracy. Functionally, interacts with and stabilizes bases of the 16S rRNA that are involved in tRNA selection in the A site and with the mRNA backbone. Located at the interface of the 30S and 50S subunits, it traverses the body of the 30S subunit contacting proteins on the other side and probably holding the rRNA structure together. The combined cluster of proteins S8, S12 and S17 appears to hold together the shoulder and platform of the 30S subunit. The protein is Small ribosomal subunit protein uS12 of Crocosphaera subtropica (strain ATCC 51142 / BH68) (Cyanothece sp. (strain ATCC 51142)).